Consider the following 465-residue polypeptide: UDP-N-acetylmuramate--L-alanine ligase (465 aa).

112–118 is an ATP binding site; the sequence is GTHGKTT.

It belongs to the MurCDEF family.

Its subcellular location is the cytoplasm. It carries out the reaction UDP-N-acetyl-alpha-D-muramate + L-alanine + ATP = UDP-N-acetyl-alpha-D-muramoyl-L-alanine + ADP + phosphate + H(+). Its pathway is cell wall biogenesis; peptidoglycan biosynthesis. Functionally, cell wall formation. The protein is UDP-N-acetylmuramate--L-alanine ligase of Burkholderia pseudomallei (strain 1106a).